A 256-amino-acid polypeptide reads, in one-letter code: Galactitol 2-dehydrogenase (256 aa).

NAD(+) contacts are provided by residues 15–17, Asp36, 59–60, Asn86, Tyr152, and Lys156; these read RGI and DV. Tyr152 functions as the Proton acceptor in the catalytic mechanism.

The protein belongs to the short-chain dehydrogenases/reductases (SDR) family.

It carries out the reaction galactitol + NAD(+) = keto-D-tagatose + NADH + H(+). It catalyses the reaction keto-D-fructose + NADH + H(+) = D-sorbitol + NAD(+). It functions in the pathway carbohydrate metabolism. In terms of biological role, involved in galactitol catabolism. Catalyzes the oxidation of galactitol to D-tagatose. Can also catalyze the oxidation of D-sorbitol to D-fructose. In Agrobacterium fabrum (strain C58 / ATCC 33970) (Agrobacterium tumefaciens (strain C58)), this protein is Galactitol 2-dehydrogenase.